A 177-amino-acid polypeptide reads, in one-letter code: B-phycoerythrin beta chain (177 aa).

The phycourobilin site is built by cysteine 50 and cysteine 61. Asparagine 72 carries the N4-methylasparagine modification. Residues cysteine 82 and cysteine 158 each contribute to the (2R,3E)-phycoerythrobilin site.

This sequence belongs to the phycobiliprotein family. As to quaternary structure, heteromer of 6 alpha, 6 beta and one gamma chain. Post-translationally, contains two covalently linked phycoerythrobilin chromophores and one covalently linked phycourobilin chromophore.

The protein localises to the plastid. The protein resides in the chloroplast thylakoid membrane. Functionally, light-harvesting photosynthetic bile pigment-protein from the phycobiliprotein complex. This Porphyridium purpureum (Red alga) protein is B-phycoerythrin beta chain (cpeB).